Reading from the N-terminus, the 337-residue chain is MGNDSVSYEYGDYSDLSDRPVDCLDGACLAIDPLRVAPLPLYAAIFLVGVPGNAMVAWVAGKVARRRVGATWLLHLAVADLLCCLSLPILAVPIARGGHWPYGAVGCRALPSIILLTMYASVLLLAALSADLCFLALGPAWWSTVQRACGVQVACGAAWTLALLLTVPSAIYRRLHQEHFPARLQCVVDYGGSSSTENAVTAIRFLFGFLGPLVAVASCHSALLCWAARRCRPLGTAIVVGFFVCWAPYHLLGLVLTVAAPNSALLARALRAEPLIVGLALAHSCLNPMLFLYFGRAQLRRSLPAACHWALRESQGQDESVDSKKSTSHDLVSEMEV.

The Extracellular portion of the chain corresponds to 1–38 (MGNDSVSYEYGDYSDLSDRPVDCLDGACLAIDPLRVAP). N-linked (GlcNAc...) asparagine glycosylation occurs at N3. The chain crosses the membrane as a helical span at residues 39–61 (LPLYAAIFLVGVPGNAMVAWVAG). Topologically, residues 62–72 (KVARRRVGATW) are cytoplasmic. Residues 73-95 (LLHLAVADLLCCLSLPILAVPIA) form a helical membrane-spanning segment. Over 96 to 114 (RGGHWPYGAVGCRALPSII) the chain is Extracellular. C107 and C186 form a disulfide bridge. A helical transmembrane segment spans residues 115–137 (LLTMYASVLLLAALSADLCFLAL). The Cytoplasmic portion of the chain corresponds to 138-149 (GPAWWSTVQRAC). A helical membrane pass occupies residues 150–172 (GVQVACGAAWTLALLLTVPSAIY). At 173–202 (RRLHQEHFPARLQCVVDYGGSSSTENAVTA) the chain is on the extracellular side. A helical transmembrane segment spans residues 203–225 (IRFLFGFLGPLVAVASCHSALLC). The Cytoplasmic portion of the chain corresponds to 226 to 237 (WAARRCRPLGTA). A helical membrane pass occupies residues 238–260 (IVVGFFVCWAPYHLLGLVLTVAA). Residues 261 to 274 (PNSALLARALRAEP) are Extracellular-facing. The chain crosses the membrane as a helical span at residues 275–294 (LIVGLALAHSCLNPMLFLYF). Topologically, residues 295-337 (GRAQLRRSLPAACHWALRESQGQDESVDSKKSTSHDLVSEMEV) are cytoplasmic. S320 carries the phosphoserine modification.

The protein belongs to the G-protein coupled receptor 1 family. Interacts with C3 (the anaphylatoxin peptide C3a and the adipogenic hormone ASP); the interaction occurs with higher affinity for ASP, enhancing the phosphorylation and activation of GPR77, recruitment of ARRB2 to the cell surface and endocytosis of GRP77. As to expression, frontal cortex, hippocampus, hypothalamus, pons and liver.

It is found in the cell membrane. In terms of biological role, receptor for the chemotactic and inflammatory C3a, C4a and C5a anaphylatoxin peptides and also for their dearginated forms ASP/C3adesArg, C4adesArg and C5adesArg respectively. Couples weakly to G(i)-mediated signaling pathways. This is C5a anaphylatoxin chemotactic receptor 2 (C5AR2) from Homo sapiens (Human).